We begin with the raw amino-acid sequence, 440 residues long: uncharacterized protein (440 aa).

This is an uncharacterized protein from Rickettsia conorii (strain ATCC VR-613 / Malish 7).